Here is a 326-residue protein sequence, read N- to C-terminus: tRNA-modifying protein YgfZ (326 aa).

The folate site is built by Trp27 and Trp189.

The protein belongs to the tRNA-modifying YgfZ family.

It is found in the cytoplasm. Folate-binding protein involved in regulating the level of ATP-DnaA and in the modification of some tRNAs. It is probably a key factor in regulatory networks that act via tRNA modification, such as initiation of chromosomal replication. The polypeptide is tRNA-modifying protein YgfZ (Escherichia coli O6:H1 (strain CFT073 / ATCC 700928 / UPEC)).